Here is a 492-residue protein sequence, read N- to C-terminus: N-succinylglutamate 5-semialdehyde dehydrogenase (492 aa).

Position 220–225 (220–225 (GSANTG)) interacts with NAD(+). Residues Glu-243 and Cys-277 contribute to the active site.

Belongs to the aldehyde dehydrogenase family. AstD subfamily.

The catalysed reaction is N-succinyl-L-glutamate 5-semialdehyde + NAD(+) + H2O = N-succinyl-L-glutamate + NADH + 2 H(+). It functions in the pathway amino-acid degradation; L-arginine degradation via AST pathway; L-glutamate and succinate from L-arginine: step 4/5. Functionally, catalyzes the NAD-dependent reduction of succinylglutamate semialdehyde into succinylglutamate. The chain is N-succinylglutamate 5-semialdehyde dehydrogenase from Escherichia coli O6:H1 (strain CFT073 / ATCC 700928 / UPEC).